The following is a 565-amino-acid chain: MSDNNVMSDLEIAQRATMRPIGDIAAAAGINADAVELYGRYKAKIDPAKLIDPAGAPKRLPGKVVLVSAMSPTPAGEGKSTTTVGLADSLARAGRNVMIALREPSLGPVLGMKGGATGGGYSQVLPMEEINLHFTGDFHAITSANNALMALVDNHIFQGNELNIDPRRMTFKRVLDMNDRSLREVIIGLGGPAQGVPRQDGFDITVASEIMAVFCLATDIADLRARLGRITFGYTYDREPVTVADLGVQGALTMLLRDAIKPNLVQTIAGTPALVHGGPFANIAHGCNSLIATQTARRLADIVVTEAGFGADLGAEKFMDIKARVAGVAPSAVVLVATVRALKMHGGVAKDRLQEPNVEALAAGSANLRRHIRNVEKFGITPVVAVNKFATDTPEELDWLLEWCAGEGVQAAVADVWGRGGGGDGGDELAAKVLAALEAPHSFRHLYPLELSVEDKIRTIVQEMYGADGVDFSVPALKRLAEIEKNGWAGMPVCMAKTQYSFSDDATRLGAPKGFTVHVRDLIPKTGAGFIVALTGAVMTMPGLPKVPAALRMDVDDTGKPLGLF.

Residue 73-80 (TPAGEGKS) participates in ATP binding.

The protein belongs to the formate--tetrahydrofolate ligase family.

The catalysed reaction is (6S)-5,6,7,8-tetrahydrofolate + formate + ATP = (6R)-10-formyltetrahydrofolate + ADP + phosphate. The protein operates within one-carbon metabolism; tetrahydrofolate interconversion. This chain is Formate--tetrahydrofolate ligase, found in Arthrobacter sp. (strain FB24).